A 376-amino-acid chain; its full sequence is Lipid-A-disaccharide synthase (376 aa).

The protein belongs to the LpxB family.

It catalyses the reaction a lipid X + a UDP-2-N,3-O-bis[(3R)-3-hydroxyacyl]-alpha-D-glucosamine = a lipid A disaccharide + UDP + H(+). Its pathway is bacterial outer membrane biogenesis; LPS lipid A biosynthesis. In terms of biological role, condensation of UDP-2,3-diacylglucosamine and 2,3-diacylglucosamine-1-phosphate to form lipid A disaccharide, a precursor of lipid A, a phosphorylated glycolipid that anchors the lipopolysaccharide to the outer membrane of the cell. In Coxiella burnetii (strain CbuK_Q154) (Coxiella burnetii (strain Q154)), this protein is Lipid-A-disaccharide synthase.